A 700-amino-acid chain; its full sequence is MAQDVLTDLTKVRNIGIMAHIDAGKTTTTERILFYTGINYKIGEVHDGAATMDWMAQEQERGITITSAATTCFWEGTQINIIDTPGHVDFTVEVERSLRVLDGAVAVFDGKEGVEPQSETVWRQADKYDVPRICFVNKMDKLGADFFFTVGTISDRLGAEPLVMQLPIGAENSFAGVVDLVHMRALTWRGEVQMGADYTVEEIPADLLDQANEYRAKLVERVAETDEALLEKYLGGEDLTPEEIKAAVRKLTINSELYPIFCGSAFKNKGVQPMLDAVIDYLPSPLDVKPMIGHKVGDESVEIIRKPDATEPFSALAFKVAAHPFFGKLTYVRVYSGVVAAGSQVVNSTKGKKERIGKLFQMHSNKENPVDEARAGHIYAMIGLKETTTGDTLSDSAQQVVLESMTFPEPVISVAIEPKTKGDQEKLGTAIQRLAEEDPTFQVELDQETGQTIIKGMGELHLDILVDRMKREYKVEANVGKPQVAYRETIRRAVLKEDYVHKKQTGGSGQYAKVQVSIEPLDTADGTFYEFVNAVTGGRVPREYIPSVDNGIQEAMQEGVVAGYPLVGIKASLIDGAAHDVDSSEMAFKIAGKMVLREAVRKAQPVLLEPVMAVEVRTPADYMGDVIGDLNSRRGQIESMEDVSGAKLVKASVPLSEMFGYVGDLRSKTQGRAVYSMQFSNYAEVPRNVADEIVKKVRGE.

Residues 10-286 (TKVRNIGIMA…AVIDYLPSPL (277 aa)) enclose the tr-type G domain. Residues 19 to 26 (AHIDAGKT), 83 to 87 (DTPGH), and 137 to 140 (NKMD) contribute to the GTP site.

The protein belongs to the TRAFAC class translation factor GTPase superfamily. Classic translation factor GTPase family. EF-G/EF-2 subfamily.

It localises to the cytoplasm. Its function is as follows. Catalyzes the GTP-dependent ribosomal translocation step during translation elongation. During this step, the ribosome changes from the pre-translocational (PRE) to the post-translocational (POST) state as the newly formed A-site-bound peptidyl-tRNA and P-site-bound deacylated tRNA move to the P and E sites, respectively. Catalyzes the coordinated movement of the two tRNA molecules, the mRNA and conformational changes in the ribosome. This chain is Elongation factor G, found in Kineococcus radiotolerans (strain ATCC BAA-149 / DSM 14245 / SRS30216).